The following is a 254-amino-acid chain: NH(3)-dependent NAD(+) synthetase (254 aa).

29–36 contacts ATP; the sequence is GLSGGIDS. Asp-35 is a binding site for Mg(2+). A deamido-NAD(+)-binding site is contributed by Arg-115. Thr-135 provides a ligand contact to ATP. Glu-140 lines the Mg(2+) pocket. Lys-148 and Asp-155 together coordinate deamido-NAD(+). ATP contacts are provided by Lys-164 and Ser-186. 245-246 serves as a coordination point for deamido-NAD(+); it reads HK.

Belongs to the NAD synthetase family. In terms of assembly, homodimer.

It carries out the reaction deamido-NAD(+) + NH4(+) + ATP = AMP + diphosphate + NAD(+) + H(+). It participates in cofactor biosynthesis; NAD(+) biosynthesis; NAD(+) from deamido-NAD(+) (ammonia route): step 1/1. Catalyzes the ATP-dependent amidation of deamido-NAD to form NAD. Uses ammonia as a nitrogen source. This is NH(3)-dependent NAD(+) synthetase from Methanococcus aeolicus (strain ATCC BAA-1280 / DSM 17508 / OCM 812 / Nankai-3).